The chain runs to 301 residues: Sulfate adenylyltransferase subunit 2 (301 aa).

The segment at 278 to 301 (ERQGRLIDGDEPASMERKKREGYF) is disordered.

It belongs to the PAPS reductase family. CysD subfamily. Sulfate-activating enzymes, NodP and NodQ, may be physically associated.

It carries out the reaction sulfate + ATP + H(+) = adenosine 5'-phosphosulfate + diphosphate. Its function is as follows. Proposed to provide activated sulfate for transfer to nod factor. The protein is Sulfate adenylyltransferase subunit 2 (nodP) of Azospirillum brasilense.